A 267-amino-acid polypeptide reads, in one-letter code: Lectin SfL-2 (267 aa).

Tandem repeats lie at residues 1–67, 68–135, 136–202, and 203–267. The interval 1-267 is 4 X approximate tandem repeats; it reads GRYTVQNQWG…GPIGFKGVAN (267 aa).

Monomer.

Its function is as follows. Lectin specific for high mannose N-glycans, recognizes the branched moiety of these glycans. Does not recognize other types of N-glycans or monosaccharides. This Solieria filiformis (Red alga) protein is Lectin SfL-2.